Here is a 369-residue protein sequence, read N- to C-terminus: NAD-dependent epimerase/dehydratase FUM13 (369 aa).

NADP(+) is bound at residue Tyr176.

This sequence belongs to the NAD(P)-dependent epimerase/dehydratase family. Dihydroflavonol-4-reductase subfamily.

It participates in mycotoxin biosynthesis. In terms of biological role, NAD-dependent epimerase/dehydratase; part of the gene cluster that mediates the biosynthesis of fumonisins B1 (FB1), B2 (FB2), B3 (FB3), and B4 (FB4), which are carcinogenic mycotoxins. Within the pathway, FUM13 stereospecifically reduces the intermediate 3-keto intermediate 2-amino-3-oxo-12,16-dimethylicosane to the 3-hydroxyl product 2-amino-3-hydroxy-12,16-dimethylicosane. The biosynthesis starts with the FUM1-catalyzed carbon chain assembly from one molecule of acetyl-CoA, eight molecules of malonyl-CoA, and two molecules of methionine (in S-adenosyl form). The C18 polyketide chain is released from the enzyme by a nucleophilic attack of a carbanion, which is derived from R-carbon of alanine by decarboxylation, on the carbonyl carbon of polyketide acyl chain. This step is catalyzed by the pyridoxal 5'-phosphate-dependent aminoacyl transferase FUM8. The resultant 3-keto intermediate is then stereospecifically reduced to a 3-hydroxyl product by reductase FUM13. Subsequent oxidations at C-10 by the cytochrome P450 monooxygenase FUM2, C-14 and C-15 by FUM6, FUM12 or FUM15, tricarballylic esterification of the hydroxyl groups on C-14 and C-15 by acyltransferase FUM14, and C-5 hydroxylation by 2-keto-glutarate-dependent dioxygenase FUM3 furnish the biosynthesis of fumonisins. The tricarballylic moieties are most likely derived from the citric acid cycle, and their addition to the carbon backbone may involve FUM7, FUM10, FUM11 and FUM14. This chain is NAD-dependent epimerase/dehydratase FUM13, found in Gibberella moniliformis (strain M3125 / FGSC 7600) (Maize ear and stalk rot fungus).